Reading from the N-terminus, the 652-residue chain is Acetyl-coenzyme A synthetase (652 aa).

CoA contacts are provided by residues 189 to 192 (RGGK) and threonine 311. ATP is bound by residues 387-389 (GEP), 411-416 (DTWWQT), aspartate 500, and arginine 515. Serine 523 is a binding site for CoA. Arginine 526 contributes to the ATP binding site. Positions 537, 539, and 542 each coordinate Mg(2+). CoA is bound at residue arginine 584. Lysine 609 carries the N6-acetyllysine modification.

It belongs to the ATP-dependent AMP-binding enzyme family. Requires Mg(2+) as cofactor. Acetylated. Deacetylation by the SIR2-homolog deacetylase activates the enzyme.

The enzyme catalyses acetate + ATP + CoA = acetyl-CoA + AMP + diphosphate. In terms of biological role, catalyzes the conversion of acetate into acetyl-CoA (AcCoA), an essential intermediate at the junction of anabolic and catabolic pathways. AcsA undergoes a two-step reaction. In the first half reaction, AcsA combines acetate with ATP to form acetyl-adenylate (AcAMP) intermediate. In the second half reaction, it can then transfer the acetyl group from AcAMP to the sulfhydryl group of CoA, forming the product AcCoA. This chain is Acetyl-coenzyme A synthetase, found in Bartonella henselae (strain ATCC 49882 / DSM 28221 / CCUG 30454 / Houston 1) (Rochalimaea henselae).